The sequence spans 102 residues: snRNA-activating protein complex subunit 5 (102 aa).

The segment covering 73–82 (QTTLKLSTRS) has biased composition (polar residues). The tract at residues 73 to 102 (QTTLKLSTRSPMEEEEEEEEEEEEEEESDS) is disordered. Residues 85-102 (EEEEEEEEEEEEEEESDS) are compositionally biased toward acidic residues.

Part of the SNAPc complex composed of 5 subunits: SNAPC1, SNAPC2, SNAPC3, SNAPC4 and SNAPC5. SNAPC5 interacts with SNAPC4.

Its subcellular location is the nucleus. In terms of biological role, part of the SNAPc complex required for the transcription of both RNA polymerase II and III small-nuclear RNA genes. Binds to the proximal sequence element (PSE), a non-TATA-box basal promoter element common to these 2 types of genes. Recruits TBP and BRF2 to the U6 snRNA TATA box. The protein is snRNA-activating protein complex subunit 5 of Mus musculus (Mouse).